We begin with the raw amino-acid sequence, 211 residues long: Small ribosomal subunit protein uS3 (211 aa).

The KH type-2 domain occupies 16–85 (IDEYFKGKLV…NPQIEVKPLE (70 aa)).

The protein belongs to the universal ribosomal protein uS3 family. Part of the 30S ribosomal subunit.

Binds the lower part of the 30S subunit head. The protein is Small ribosomal subunit protein uS3 of Methanococcus vannielii (strain ATCC 35089 / DSM 1224 / JCM 13029 / OCM 148 / SB).